Consider the following 678-residue polypeptide: ABC transporter G family member 13 (678 aa).

Positions 10 to 254 (VAWEDLTVVI…FGEAGFPCPS (245 aa)) constitute an ABC transporter domain. Residue 48–55 (GPSGSGKS) coordinates ATP. The 213-residue stretch at 355–567 (KQLRILTQRS…ALQGAYKNEM (213 aa)) folds into the ABC transmembrane type-2 domain. Transmembrane regions (helical) follow at residues 374–394 (YYWM…SIFF), 409–429 (CGGF…QSFI), 446–466 (VAVY…LMCL), 490–510 (LDLI…ASVV), 513–533 (FLMG…SAGF), and 602–622 (LDLA…FAIL). S658 is modified (phosphoserine).

The protein belongs to the ABC transporter superfamily. ABCG family. Eye pigment precursor importer (TC 3.A.1.204) subfamily.

Its subcellular location is the membrane. This is ABC transporter G family member 13 (ABCG13) from Arabidopsis thaliana (Mouse-ear cress).